The sequence spans 141 residues: Nucleoside diphosphate kinase (141 aa).

ATP contacts are provided by K11, F59, R87, T93, R104, and N114. H117 functions as the Pros-phosphohistidine intermediate in the catalytic mechanism.

The protein belongs to the NDK family. As to quaternary structure, homotetramer. Mg(2+) is required as a cofactor.

Its subcellular location is the cytoplasm. It catalyses the reaction a 2'-deoxyribonucleoside 5'-diphosphate + ATP = a 2'-deoxyribonucleoside 5'-triphosphate + ADP. It carries out the reaction a ribonucleoside 5'-diphosphate + ATP = a ribonucleoside 5'-triphosphate + ADP. Its function is as follows. Major role in the synthesis of nucleoside triphosphates other than ATP. The ATP gamma phosphate is transferred to the NDP beta phosphate via a ping-pong mechanism, using a phosphorylated active-site intermediate. This is Nucleoside diphosphate kinase from Paracidovorax citrulli (strain AAC00-1) (Acidovorax citrulli).